A 248-amino-acid polypeptide reads, in one-letter code: 5'-nucleotidase SurE (248 aa).

Residues aspartate 8, aspartate 9, serine 39, and asparagine 91 each contribute to the a divalent metal cation site.

It belongs to the SurE nucleotidase family. It depends on a divalent metal cation as a cofactor.

The protein localises to the cytoplasm. The catalysed reaction is a ribonucleoside 5'-phosphate + H2O = a ribonucleoside + phosphate. Nucleotidase that shows phosphatase activity on nucleoside 5'-monophosphates. The sequence is that of 5'-nucleotidase SurE from Geotalea daltonii (strain DSM 22248 / JCM 15807 / FRC-32) (Geobacter daltonii).